Consider the following 872-residue polypeptide: Alanine--tRNA ligase (872 aa).

Positions 567, 571, 669, and 673 each coordinate Zn(2+).

The protein belongs to the class-II aminoacyl-tRNA synthetase family. Requires Zn(2+) as cofactor.

Its subcellular location is the cytoplasm. It catalyses the reaction tRNA(Ala) + L-alanine + ATP = L-alanyl-tRNA(Ala) + AMP + diphosphate. In terms of biological role, catalyzes the attachment of alanine to tRNA(Ala) in a two-step reaction: alanine is first activated by ATP to form Ala-AMP and then transferred to the acceptor end of tRNA(Ala). Also edits incorrectly charged Ser-tRNA(Ala) and Gly-tRNA(Ala) via its editing domain. The sequence is that of Alanine--tRNA ligase from Streptococcus pyogenes serotype M28 (strain MGAS6180).